Consider the following 948-residue polypeptide: RNA polymerase-associated protein RapA (948 aa).

Residues 164-332 (EVADRIAPRV…FARLRLLDPN (169 aa)) enclose the Helicase ATP-binding domain. Position 177 to 184 (177 to 184 (DEVGLGKT)) interacts with ATP. The DEAH box signature appears at 278–281 (DEAH). Residues 473–627 (RVDWLIDTLK…TCPTGNALQH (155 aa)) form the Helicase C-terminal domain.

It belongs to the SNF2/RAD54 helicase family. RapA subfamily. In terms of assembly, interacts with the RNAP. Has a higher affinity for the core RNAP than for the holoenzyme. Its ATPase activity is stimulated by binding to RNAP.

In terms of biological role, transcription regulator that activates transcription by stimulating RNA polymerase (RNAP) recycling in case of stress conditions such as supercoiled DNA or high salt concentrations. Probably acts by releasing the RNAP, when it is trapped or immobilized on tightly supercoiled DNA. Does not activate transcription on linear DNA. Probably not involved in DNA repair. This is RNA polymerase-associated protein RapA from Pseudomonas syringae pv. syringae (strain B728a).